The chain runs to 188 residues: HTH-type transcriptional regulator QacR (188 aa).

An HTH tetR-type domain is found at 1-61 (MNLKDKILGV…EILNIEESKW (61 aa)). A DNA-binding region (H-T-H motif) is located at residues 24-43 (TTGEIVKLSESSKGNLYYHF).

In terms of assembly, homodimer. Binds cooperatively to DNA as a pair of dimers.

Functionally, transcriptional repressor of qacA. Binds to IR1, an unusually long 28 bp operator, which is located downstream from the qacA promoter and overlaps its transcription start site. QacR is induced from its IR1 site by binding to one of many structurally dissimilar cationic lipophilic compounds, which are also substrates of QacA. The sequence is that of HTH-type transcriptional regulator QacR (qacR) from Staphylococcus aureus (strain Mu50 / ATCC 700699).